A 256-amino-acid chain; its full sequence is Alcohol dehydrogenase (256 aa).

Residue 12 to 35 (FVAGLGGIGLDTSKELVKRDLKNL) coordinates NAD(+). Ser-140 lines the substrate pocket. The Proton acceptor role is filled by Tyr-153.

Belongs to the short-chain dehydrogenases/reductases (SDR) family. Homodimer.

The enzyme catalyses a primary alcohol + NAD(+) = an aldehyde + NADH + H(+). It catalyses the reaction a secondary alcohol + NAD(+) = a ketone + NADH + H(+). In Drosophila tsacasi (Fruit fly), this protein is Alcohol dehydrogenase (Adh).